We begin with the raw amino-acid sequence, 749 residues long: Cytosolic phospholipase A2 (749 aa).

Positions methionine 1–serine 178 are phospholipid binding. The residue at position 2 (serine 2) is a Phosphoserine. In terms of domain architecture, C2 spans proline 6–phenylalanine 122. Aspartate 40, threonine 41, aspartate 43, asparagine 65, aspartate 93, alanine 94, and asparagine 95 together coordinate Ca(2+). The region spanning serine 140–asparagine 740 is the PLA2c domain. Residue serine 228 is the Nucleophile of the active site. Threonine 268 carries the phosphothreonine modification. Positions alanine 426–asparagine 458 are disordered. Serine 434, serine 435, and serine 437 each carry phosphoserine. Residues glycine 446–glutamine 457 show a composition bias toward basic and acidic residues. At serine 505 the chain carries Phosphoserine; by MAPK. Serine 515 carries the phosphoserine modification. Lysine 541 is covalently cross-linked (Glycyl lysine isopeptide (Lys-Gly) (interchain with G-Cter in SUMO2)). Residue aspartate 549 is the Proton acceptor of the active site. A Glycyl lysine isopeptide (Lys-Gly) (interchain with G-Cter in SUMO2) cross-link involves residue lysine 606. Phosphoserine is present on residues serine 727 and serine 729.

In terms of assembly, interacts with KAT5. In terms of processing, phosphorylated at both Ser-505 and Ser-727 in response to mitogenic stimuli. Detected in granulosa cells after stimulation with chorionic gonadotropin (at protein level).

Its subcellular location is the cytoplasm. The protein localises to the golgi apparatus membrane. It localises to the nucleus envelope. The catalysed reaction is a 1,2-diacyl-sn-glycero-3-phosphocholine + H2O = a 1-acyl-sn-glycero-3-phosphocholine + a fatty acid + H(+). The enzyme catalyses a 1-O-alkyl-2-acyl-sn-glycero-3-phosphocholine + H2O = a 1-O-alkyl-sn-glycero-3-phosphocholine + a fatty acid + H(+). It catalyses the reaction a 1-acyl-sn-glycero-3-phosphocholine + H2O = sn-glycerol 3-phosphocholine + a fatty acid + H(+). It carries out the reaction 1-hexadecanoyl-2-(5Z,8Z,11Z,14Z-eicosatetraenoyl)-sn-glycero-3-phosphocholine + H2O = 1-hexadecanoyl-sn-glycero-3-phosphocholine + (5Z,8Z,11Z,14Z)-eicosatetraenoate + H(+). The catalysed reaction is 1,2-di-(5Z,8Z,11Z,14Z-eicosatetraenoyl)-sn-glycero-3-phosphocholine + H2O = 1-(5Z,8Z,11Z,14Z-eicosatetraenoyl)-sn-glycero-3-phosphocholine + (5Z,8Z,11Z,14Z)-eicosatetraenoate + H(+). The enzyme catalyses 1-octadecanoyl-2-(5Z,8Z,11Z,14Z-eicosatetraenoyl)-sn-glycero-3-phosphocholine + H2O = 1-octadecanoyl-sn-glycero-3-phosphocholine + (5Z,8Z,11Z,14Z)-eicosatetraenoate + H(+). It catalyses the reaction 1-hexadecanoyl-2-(9Z,12Z-octadecadienoyl)-sn-glycero-3-phosphocholine + H2O = (9Z,12Z)-octadecadienoate + 1-hexadecanoyl-sn-glycero-3-phosphocholine + H(+). It carries out the reaction 1-octadecanoyl-2-(9Z,12Z,15Z-octadecatrienoyl)-sn-glycero-3-phosphocholine + H2O = (9Z,12Z,15Z)-octadecatrienoate + 1-octadecanoyl-sn-glycero-3-phosphocholine + H(+). The catalysed reaction is 1-(5Z,8Z,11Z,14Z-eicosatetraenoyl)-2-hexadecanoyl-sn-glycero-3-phosphocholine + H2O = 1-(5Z,8Z,11Z,14Z-eicosatetraenoyl)-sn-glycero-3-phosphocholine + hexadecanoate + H(+). The enzyme catalyses 1-O-hexadecyl-2-(5Z,8Z,11Z,14Z)-eicosatetraenoyl-sn-glycero-3-phosphocholine + H2O = 1-O-hexadecyl-sn-glycero-3-phosphocholine + (5Z,8Z,11Z,14Z)-eicosatetraenoate + H(+). It catalyses the reaction 1,2-di-(9Z-octadecenoyl)-sn-glycero-3-phospho-(1'-sn-glycerol) + H2O = 1-(9Z-octadecenoyl)-sn-glycero-3-phospho-(1'-sn-glycerol) + (9Z)-octadecenoate + H(+). It carries out the reaction 1-octadecanoyl-2-(5Z,8Z,11Z,14Z-eicosatetraenoyl)-sn-glycero-3-phosphate + H2O = 1-octadecanoyl-sn-glycero-3-phosphate + (5Z,8Z,11Z,14Z)-eicosatetraenoate + H(+). The catalysed reaction is 1-hexadecanoyl-sn-glycero-3-phosphocholine + H2O = sn-glycerol 3-phosphocholine + hexadecanoate + H(+). The enzyme catalyses 2-(prostaglandin E2)-sn-glycero-3-phosphoethanolamine + H2O = sn-glycero-3-phosphoethanolamine + prostaglandin E2 + H(+). It catalyses the reaction 2-[(15S)-hydroxy-(5Z,8Z,11Z,13E)-eicosatetraenoyl]-sn-glycero-3-phosphocholine + H2O = (15S)-hydroxy-(5Z,8Z,11Z,13E)-eicosatetraenoate + sn-glycerol 3-phosphocholine + H(+). It carries out the reaction 2-[(15R)-hydroxy-(5Z,8Z,11Z,13E)-eicosatetraenoyl]-sn-glycero-3-phosphocholine + H2O = (15R)-hydroxy-(5Z,8Z,11Z,13E)-eicosatetraenoate + sn-glycerol 3-phosphocholine + H(+). The catalysed reaction is 2-(prostaglandin E2)-sn-glycero-3-phosphocholine + H2O = prostaglandin E2 + sn-glycerol 3-phosphocholine + H(+). The enzyme catalyses 2-[(11R)-hydroxy-(5Z,8Z,12E,14Z)-eicosatetraenoyl]-sn-glycero-3-phosphocholine + H2O = (11R)-hydroxy-(5Z,8Z,12E,14Z)-eicosatetraenoate + sn-glycerol 3-phosphocholine + H(+). It catalyses the reaction 1-(5Z,8Z,11Z,14Z-eicosatetraenoyl)-2-O-hexadecyl-sn-glycero-3-phosphocholine + H2O = 2-O-hexadecyl-sn-glycero-3-phosphocholine + (5Z,8Z,11Z,14Z)-eicosatetraenoate + H(+). It carries out the reaction 1-octadecanoyl-2-(5Z,8Z,11Z,14Z-eicosatetraenoyl)-sn-glycero-3-phosphocholine + glycerol = 1-(5Z,8Z,11Z,14Z-eicosatetraenoyl)-glycerol + 1-octadecanoyl-sn-glycero-3-phosphocholine. The catalysed reaction is 1-octadecanoyl-2-(9Z,12Z,15Z-octadecatrienoyl)-sn-glycero-3-phosphocholine + glycerol = 1-(9Z,12Z,15Z-octadecatrienoyl)-glycerol + 1-octadecanoyl-sn-glycero-3-phosphocholine. It functions in the pathway membrane lipid metabolism; glycerophospholipid metabolism. Its pathway is lipid metabolism; arachidonate metabolism. The protein operates within lipid metabolism; prostaglandin biosynthesis. It participates in lipid metabolism; leukotriene B4 biosynthesis. With respect to regulation, activated by cytosolic calcium, which is necessary for binding to membrane lipids. Activated by phosphorylation in response to mitogenic stimuli. Functionally, has primarily calcium-dependent phospholipase and lysophospholipase activities, with a major role in membrane lipid remodeling and biosynthesis of lipid mediators of the inflammatory response. Plays an important role in embryo implantation and parturition through its ability to trigger prostanoid production. Preferentially hydrolyzes the ester bond of the fatty acyl group attached at sn-2 position of phospholipids (phospholipase A2 activity). Selectively hydrolyzes sn-2 arachidonoyl group from membrane phospholipids, providing the precursor for eicosanoid biosynthesis via the cyclooxygenase pathway. In an alternative pathway of eicosanoid biosynthesis, hydrolyzes sn-2 fatty acyl chain of eicosanoid lysophopholipids to release free bioactive eicosanoids. Hydrolyzes the ester bond of the fatty acyl group attached at sn-1 position of phospholipids (phospholipase A1 activity) only if an ether linkage rather than an ester linkage is present at the sn-2 position. This hydrolysis is not stereospecific. Has calcium-independent phospholipase A2 and lysophospholipase activities in the presence of phosphoinositides. Has O-acyltransferase activity. Catalyzes the transfer of fatty acyl chains from phospholipids to a primary hydroxyl group of glycerol (sn-1 or sn-3), potentially contributing to monoacylglycerol synthesis. The polypeptide is Cytosolic phospholipase A2 (PLA2G4A) (Bos taurus (Bovine)).